A 251-amino-acid polypeptide reads, in one-letter code: Small ribosomal subunit protein uS2 (251 aa).

The protein belongs to the universal ribosomal protein uS2 family.

The polypeptide is Small ribosomal subunit protein uS2 (Azoarcus sp. (strain BH72)).